Reading from the N-terminus, the 592-residue chain is E3 ubiquitin-protein ligase RNF180 (592 aa).

Over 1–564 (MKRSKELITK…DSRGWWFDMD (564 aa)) the chain is Cytoplasmic. Ser230 is modified (phosphoserine). The RING-type zinc finger occupies 432–474 (CAVCLDVYFNPYMCYPCRHIFCEPCLRTLAKDNPSSTPCPLCR). The chain crosses the membrane as a helical span at residues 565-585 (MVIIYIYSVNWVIGFIVFCFL). Topologically, residues 586–592 (CYFFFPF) are extracellular.

In terms of assembly, interacts with ZIC2.

It localises to the endoplasmic reticulum membrane. The protein resides in the nucleus envelope. The enzyme catalyses S-ubiquitinyl-[E2 ubiquitin-conjugating enzyme]-L-cysteine + [acceptor protein]-L-lysine = [E2 ubiquitin-conjugating enzyme]-L-cysteine + N(6)-ubiquitinyl-[acceptor protein]-L-lysine.. The protein operates within protein modification; protein ubiquitination. E3 ubiquitin-protein ligase which promotes polyubiquitination and degradation by the proteasome pathway of ZIC2. The polypeptide is E3 ubiquitin-protein ligase RNF180 (RNF180) (Pongo abelii (Sumatran orangutan)).